Here is a 198-residue protein sequence, read N- to C-terminus: Probable GTP-binding protein EngB (198 aa).

The 174-residue stretch at 22 to 195 (DLPEIALAGR…WKAIHKFTKT (174 aa)) folds into the EngB-type G domain. Residues 30–37 (GRSNVGKS), 57–61 (GKTQT), 75–78 (DVPG), 142–145 (TKAD), and 174–176 (FSS) each bind GTP. Residues S37 and T59 each coordinate Mg(2+).

It belongs to the TRAFAC class TrmE-Era-EngA-EngB-Septin-like GTPase superfamily. EngB GTPase family. Mg(2+) serves as cofactor.

In terms of biological role, necessary for normal cell division and for the maintenance of normal septation. In Bacillus anthracis (strain A0248), this protein is Probable GTP-binding protein EngB.